A 317-amino-acid polypeptide reads, in one-letter code: Transaldolase (317 aa).

Lys-132 (schiff-base intermediate with substrate) is an active-site residue.

The protein belongs to the transaldolase family. Type 1 subfamily. Homodimer.

The protein resides in the cytoplasm. It catalyses the reaction D-sedoheptulose 7-phosphate + D-glyceraldehyde 3-phosphate = D-erythrose 4-phosphate + beta-D-fructose 6-phosphate. The protein operates within carbohydrate degradation; pentose phosphate pathway; D-glyceraldehyde 3-phosphate and beta-D-fructose 6-phosphate from D-ribose 5-phosphate and D-xylulose 5-phosphate (non-oxidative stage): step 2/3. Functionally, transaldolase is important for the balance of metabolites in the pentose-phosphate pathway. The protein is Transaldolase of Edwardsiella ictaluri (strain 93-146).